A 420-amino-acid chain; its full sequence is Melatonin receptor type 1C (420 aa).

Residues 1 to 34 are Extracellular-facing; the sequence is MMEVNSTCLDCRTPGTIRTEQDAQDSASQGLTSA. N5 carries an N-linked (GlcNAc...) asparagine glycan. Residues 35 to 55 traverse the membrane as a helical segment; the sequence is LAVVLIFTIVVDVLGNILVIL. At 56 to 73 the chain is on the cytoplasmic side; the sequence is SVLRNKKLQNAGNLFVVS. A helical transmembrane segment spans residues 74–94; it reads LSIADLVVAVYPYPVILIAIF. Residues 95–106 lie on the Extracellular side of the membrane; the sequence is QNGWTLGNIHCQ. Residues C105 and C182 are joined by a disulfide bond. Residues 107-127 form a helical membrane-spanning segment; the sequence is ISGFLMGLSVIGSVFNITAIA. Topologically, residues 128–152 are cytoplasmic; it reads INRYCYICHSLRYDKLYNQRSTWCY. The chain crosses the membrane as a helical span at residues 153 to 173; it reads LGLTWILTIIAIVPNFFVGSL. Residues 174-192 are Extracellular-facing; sequence QYDPRIFSCTFAQTVSSSY. The helical transmembrane segment at 193–213 threads the bilayer; sequence TITVVVVHFIVPLSVVTFCYL. The Cytoplasmic portion of the chain corresponds to 214–245; that stretch reads RIWVLVIQVKHRVRQDFKQKLTQTDLRNFLTM. The chain crosses the membrane as a helical span at residues 246–266; sequence FVVFVLFAVCWAPLNFIGLAV. Topologically, residues 267–279 are extracellular; sequence AINPFHVAPKIPE. The helical transmembrane segment at 280–303 threads the bilayer; it reads WLFVLSYFMAYFNSCLNAVIYGVL. At 304-420 the chain is on the cytoplasmic side; the sequence is NQNFRKEYKR…ELCKDGISQR (117 aa).

This sequence belongs to the G-protein coupled receptor 1 family. In terms of tissue distribution, moderately expressed in dermal melanophores.

It is found in the cell membrane. Its function is as follows. High affinity receptor for melatonin. Likely to mediate the potent effects of melatonin on pigment aggregation in melanophores. The activity of this receptor is mediated by pertussis toxin sensitive G proteins that inhibit adenylate cyclase activity. This chain is Melatonin receptor type 1C (mtnr1c), found in Xenopus laevis (African clawed frog).